Consider the following 161-residue polypeptide: Tropomyosin (161 aa).

A coiled-coil region spans residues 1 to 161; that stretch reads MDKLREKINA…DEVHQALEDL (161 aa). Basic and acidic residues predominate over residues 40–52; that stretch reads EQEYESLSRKSEA. 2 disordered regions span residues 40-65 and 107-134; these read EQEY…EETK and EKMR…DDME.

In terms of assembly, homodimer.

It is found in the cytoplasm. It localises to the cytoskeleton. In terms of biological role, forms part of the F-actin contractile ring during cytokinesis. The protein is Tropomyosin (cdc8) of Schizosaccharomyces pombe (strain 972 / ATCC 24843) (Fission yeast).